The primary structure comprises 1755 residues: Transposon TyH3 Gag-Pol polyprotein (1755 aa).

Polar residues-rich tracts occupy residues 1–23 (MESQQLSQHSPNSHGSACASVTS), 48–60 (TKANSQQTTTPAS), and 127–152 (QSQFPQYPSSVGTPLSTPSPESGNTF). Disordered stretches follow at residues 1–93 (MESQ…MMTQ), 126–173 (PQSQ…RPPP), and 352–421 (GSRN…SKST). The segment covering 153 to 165 (TDSSSADSDMTST) has biased composition (low complexity). The interval 299–401 (NNGIHINNKV…NSKSKTARAH (103 aa)) is RNA-binding. Residues 402–418 (NVSTSNNSPSTDNDSIS) are compositionally biased toward low complexity. The residue at position 416 (Ser-416) is a Phosphoserine. The active-site For protease activity; shared with dimeric partner is Asp-461. The interval 583 to 640 (NVHTSESTRKYPYPFIHRMLAHANAQTIRYSLKNNTITYFNESDVDWSSAIDYQCPDC) is integrase-type zinc finger-like. The Integrase catalytic domain occupies 660–835 (NSYEPFQYLH…AGLDISTLLP (176 aa)). Residues Asp-671 and Asp-736 each coordinate Mg(2+). Disordered stretches follow at residues 956–1087 (SKAV…ETEK), 1092–1111 (RSPSIDASPPENNSSHNIVP), and 1130–1187 (DLPL…DNET). Residues 960 to 969 (SPTDSTPPST) are compositionally biased toward low complexity. A compositionally biased stretch (polar residues) spans 1005–1015 (STPQISNIEST). Basic and acidic residues predominate over residues 1038–1053 (ESSHASKSKDFRHSDS). Polar residues-rich tracts occupy residues 1054–1082 (YSENETNHTNVPISSTGGTNNKTVPQISD) and 1101–1111 (PENNSSHNIVP). Positions 1178-1212 (KKRSLEDNETEIKVSRDTWNTKNMRSLEPPRSKKR) match the Bipartite nuclear localization signal motif. Positions 1338-1476 (NNYYITQLDI…DILGLEIKYQ (139 aa)) constitute a Reverse transcriptase Ty1/copia-type domain. Positions 1346, 1427, 1428, 1610, 1652, and 1685 each coordinate Mg(2+). The region spanning 1610-1752 (DASYGNQPYY…IKTFKLLTNK (143 aa)) is the RNase H Ty1/copia-type domain.

As to quaternary structure, the capsid protein forms a homotrimer, from which the VLPs are assembled. The protease is a homodimer, whose active site consists of two apposed aspartic acid residues. Initially, virus-like particles (VLPs) are composed of the structural unprocessed proteins Gag and Gag-Pol, and also contain the host initiator methionine tRNA (tRNA(i)-Met) which serves as a primer for minus-strand DNA synthesis, and a dimer of genomic Ty RNA. Processing of the polyproteins occurs within the particle and proceeds by an ordered pathway, called maturation. First, the protease (PR) is released by autocatalytic cleavage of the Gag-Pol polyprotein yielding capsid protein p45 and a Pol-p154 precursor protein. This cleavage is a prerequisite for subsequent processing of Pol-p154 at the remaining sites to release the mature structural and catalytic proteins. Maturation takes place prior to the RT reaction and is required to produce transposition-competent VLPs.

The protein localises to the cytoplasm. Its subcellular location is the nucleus. It catalyses the reaction DNA(n) + a 2'-deoxyribonucleoside 5'-triphosphate = DNA(n+1) + diphosphate. The enzyme catalyses Endonucleolytic cleavage to 5'-phosphomonoester.. Its function is as follows. Capsid protein (CA) is the structural component of the virus-like particle (VLP), forming the shell that encapsulates the retrotransposons dimeric RNA genome. The particles are assembled from trimer-clustered units and there are holes in the capsid shells that allow for the diffusion of macromolecules. CA also has nucleocapsid-like chaperone activity, promoting primer tRNA(i)-Met annealing to the multipartite primer-binding site (PBS), dimerization of Ty1 RNA and initiation of reverse transcription. In terms of biological role, the aspartyl protease (PR) mediates the proteolytic cleavages of the Gag and Gag-Pol polyproteins after assembly of the VLP. Functionally, reverse transcriptase/ribonuclease H (RT) is a multifunctional enzyme that catalyzes the conversion of the retro-elements RNA genome into dsDNA within the VLP. The enzyme displays a DNA polymerase activity that can copy either DNA or RNA templates, and a ribonuclease H (RNase H) activity that cleaves the RNA strand of RNA-DNA heteroduplexes during plus-strand synthesis and hydrolyzes RNA primers. The conversion leads to a linear dsDNA copy of the retrotransposon that includes long terminal repeats (LTRs) at both ends. Integrase (IN) targets the VLP to the nucleus, where a subparticle preintegration complex (PIC) containing at least integrase and the newly synthesized dsDNA copy of the retrotransposon must transit the nuclear membrane. Once in the nucleus, integrase performs the integration of the dsDNA into the host genome. The polypeptide is Transposon TyH3 Gag-Pol polyprotein (TY1B) (Saccharomyces cerevisiae (Baker's yeast)).